Here is a 346-residue protein sequence, read N- to C-terminus: MESVSCSAAAVRTGDMESQRDLSLVPERLQRREQERQLEVERRKQKRQNQEVEKENSHFFVATFVRERAAVEELLERAESVERLEEAASRLQGLQKLINDSVFFLAAYDLRQGQEALARLQAALAERRRGLQPKKRFAFKTRGKDAASSTKVDAAPGIPPAVESIQDSPLPKKAEGDLGPSWVCGFSNLESQVLEKRASELHQRDVLLTELSNCTVRLYGNPNTLRLTKAHSCKLLCGPVSTSVFLEDCSDCVLAVACQQLRIHSTKDTRIFLQVTSRAIVEDCSGIQFAPYTWSYPEIDKDFESSGLDRSKNNWNDVDDFNWLARDMASPNWSILPEEERNIQWD.

Methionine 1 carries the N-acetylmethionine modification. A disordered region spans residues 1–26; sequence MESVSCSAAAVRTGDMESQRDLSLVP. Phosphoserine occurs at positions 80 and 168. The disordered stretch occupies residues 140 to 171; the sequence is KTRGKDAASSTKVDAAPGIPPAVESIQDSPLP. Positions 171–323 constitute a C-CAP/cofactor C-like domain; it reads PKKAEGDLGP…NWNDVDDFNW (153 aa).

Belongs to the TBCC family. Supercomplex made of cofactors A to E. Cofactors A and D function by capturing and stabilizing tubulin in a quasi-native conformation. Cofactor E binds to the cofactor D-tubulin complex; interaction with cofactor C then causes the release of tubulin polypeptides that are committed to the native state. As to expression, expressed in the retina. Expressed in the rod and cone photoreceptors, extending from the inner segments (IS), through the outer nuclear layer (ONL) and into the synapses in the outer plexiform layer (OPL). Strongly expressed to the photoreceptor connecting cilium at the tips of the IS (at protein level).

The protein resides in the cytoplasm. Its function is as follows. Tubulin-folding protein; involved in the final step of the tubulin folding pathway. In Homo sapiens (Human), this protein is Tubulin-specific chaperone C (TBCC).